Consider the following 307-residue polypeptide: MTEKLSMQAIILKLQQYWSAQGCMLMQAYDTEKGAGTMSPYTFLRAIGPEPWNAAYVEPSRRPADGRYGENPNRLYQHHQFQVIMKPSPDNIQELYLNSLKELGIDPLEHDIRFVEDNWENPSMGCAGVGWEVWLDGMEITQFTYFQVVGGMEVDPVTSEVTYGLERLASYIQDVNSVFDLEWADGVKYGDIFKEPEYEHSKYSFEESNQDMLLRHFDEFEDEAKKQIANGLVHPAYDYVLKCSHTFNLLDARGAVSVTERAGYLSRIRNMARSIARAFVAERKKRGFPLVKDEKLRQQLLADEEAK.

Belongs to the class-II aminoacyl-tRNA synthetase family. As to quaternary structure, tetramer of two alpha and two beta subunits.

The protein resides in the cytoplasm. The catalysed reaction is tRNA(Gly) + glycine + ATP = glycyl-tRNA(Gly) + AMP + diphosphate. The protein is Glycine--tRNA ligase alpha subunit of Levilactobacillus brevis (strain ATCC 367 / BCRC 12310 / CIP 105137 / JCM 1170 / LMG 11437 / NCIMB 947 / NCTC 947) (Lactobacillus brevis).